A 416-amino-acid polypeptide reads, in one-letter code: Pre-mRNA-splicing factor slu-7 (416 aa).

The interval 1 to 34 (MPPPPPNRREQATAAPSSTDKSETGAGAARKEDN) is disordered. Residues 95–112 (GACENCGAMGHKKKDCLE) form a CCHC-type zinc finger. Composition is skewed to basic and acidic residues over residues 168–179 (RRALQGDQKTPD) and 188–213 (DDKS…QSMR). The interval 168 to 213 (RRALQGDQKTPDGEGADGPEDDKSGFKYDEESDMGRDRATTKQSMR) is disordered.

Belongs to the SLU7 family. In terms of assembly, associated with the spliceosome.

The protein localises to the nucleus. Functionally, involved in pre-mRNA splicing. This Neurospora crassa (strain ATCC 24698 / 74-OR23-1A / CBS 708.71 / DSM 1257 / FGSC 987) protein is Pre-mRNA-splicing factor slu-7 (slu-7).